The following is a 154-amino-acid chain: Probable chemoreceptor glutamine deamidase CheD (154 aa).

It belongs to the CheD family.

The catalysed reaction is L-glutaminyl-[protein] + H2O = L-glutamyl-[protein] + NH4(+). In terms of biological role, probably deamidates glutamine residues to glutamate on methyl-accepting chemotaxis receptors (MCPs), playing an important role in chemotaxis. This Methanococcus vannielii (strain ATCC 35089 / DSM 1224 / JCM 13029 / OCM 148 / SB) protein is Probable chemoreceptor glutamine deamidase CheD.